Here is a 153-residue protein sequence, read N- to C-terminus: 4'-phosphopantetheinyl transferase B, mitochondrial (153 aa).

The protein belongs to the P-Pant transferase superfamily.

It localises to the mitochondrion. The catalysed reaction is apo-[ACP] + CoA = holo-[ACP] + adenosine 3',5'-bisphosphate + H(+). Its function is as follows. Acyl-carrier-protein synthase transfers the 4'-phosphopantetheine moiety from coenzyme A to a Ser of an acyl-carrier-protein. The 4'-phosphopantetheine (4'-PPT) portion of CoA provides the essential prosthetic group for a number of carrier proteins and multi-domain enzymes, priming them for the acceptance of acyl building blocks in fatty acid synthesis and many aspects of secondary metabolism mediated by polyketide synthases (PKSs) and non-ribosomal peptide synthetases (NRPSs). PptB is specific for the mitochondrial acyl carrier protein acpA. This is 4'-phosphopantetheinyl transferase B, mitochondrial from Aspergillus fumigatus (strain ATCC MYA-4609 / CBS 101355 / FGSC A1100 / Af293) (Neosartorya fumigata).